The following is a 193-amino-acid chain: Ribosome hibernation promotion factor (193 aa).

It belongs to the HPF/YfiA ribosome-associated protein family. Long HPF subfamily. In terms of assembly, interacts with 100S ribosomes.

It is found in the cytoplasm. Its function is as follows. Might modulate either transcription and/or translation. Functionally, required for dimerization of active 70S ribosomes into 100S ribosomes in stationary phase; 100S ribosomes are translationally inactive and sometimes present during exponential growth. The sequence is that of Ribosome hibernation promotion factor from Picosynechococcus sp. (strain ATCC 27264 / PCC 7002 / PR-6) (Agmenellum quadruplicatum).